A 209-amino-acid polypeptide reads, in one-letter code: Ribosomal RNA small subunit methyltransferase G (209 aa).

S-adenosyl-L-methionine is bound by residues G72, L77, 123 to 124 (AE), and R138.

This sequence belongs to the methyltransferase superfamily. RNA methyltransferase RsmG family.

It localises to the cytoplasm. In terms of biological role, specifically methylates the N7 position of guanine in position 518 of 16S rRNA. This chain is Ribosomal RNA small subunit methyltransferase G, found in Leifsonia xyli subsp. xyli (strain CTCB07).